Consider the following 279-residue polypeptide: Dermonecrotic toxin LspiSicTox-betaIE3i (279 aa).

Residue histidine 5 is part of the active site. Positions 25 and 27 each coordinate Mg(2+). Histidine 41 functions as the Nucleophile in the catalytic mechanism. 2 disulfides stabilise this stretch: cysteine 45–cysteine 51 and cysteine 47–cysteine 190. Position 85 (aspartate 85) interacts with Mg(2+).

Belongs to the arthropod phospholipase D family. Class II subfamily. The cofactor is Mg(2+). In terms of tissue distribution, expressed by the venom gland.

The protein resides in the secreted. It catalyses the reaction an N-(acyl)-sphingosylphosphocholine = an N-(acyl)-sphingosyl-1,3-cyclic phosphate + choline. It carries out the reaction an N-(acyl)-sphingosylphosphoethanolamine = an N-(acyl)-sphingosyl-1,3-cyclic phosphate + ethanolamine. The catalysed reaction is a 1-acyl-sn-glycero-3-phosphocholine = a 1-acyl-sn-glycero-2,3-cyclic phosphate + choline. The enzyme catalyses a 1-acyl-sn-glycero-3-phosphoethanolamine = a 1-acyl-sn-glycero-2,3-cyclic phosphate + ethanolamine. In terms of biological role, dermonecrotic toxins cleave the phosphodiester linkage between the phosphate and headgroup of certain phospholipids (sphingolipid and lysolipid substrates), forming an alcohol (often choline) and a cyclic phosphate. This toxin acts on sphingomyelin (SM). It may also act on ceramide phosphoethanolamine (CPE), lysophosphatidylcholine (LPC) and lysophosphatidylethanolamine (LPE), but not on lysophosphatidylserine (LPS), and lysophosphatidylglycerol (LPG). It acts by transphosphatidylation, releasing exclusively cyclic phosphate products as second products. Induces dermonecrosis, hemolysis, increased vascular permeability, edema, inflammatory response, and platelet aggregation. The chain is Dermonecrotic toxin LspiSicTox-betaIE3i from Loxosceles spinulosa (Recluse spider).